We begin with the raw amino-acid sequence, 1303 residues long: Phosphoribosylformylglycinamidine synthase (1303 aa).

Residues 308 to 319 (GASTGSGGEIRD) and alanine 679 contribute to the ATP site. The Mg(2+) site is built by glutamate 719, asparagine 723, and aspartate 892. Residues 1003 to 1023 (LRDNPACADQEHEAKKDNSDP) are disordered. Residues 1011-1021 (DQEHEAKKDNS) show a composition bias toward basic and acidic residues. In terms of domain architecture, Glutamine amidotransferase type-1 spans 1050 to 1303 (MAILREQGVN…MFQNARKNIG (254 aa)). Residue cysteine 1143 is the Nucleophile of the active site. Active-site residues include histidine 1268 and glutamate 1270.

The protein in the N-terminal section; belongs to the FGAMS family. As to quaternary structure, monomer.

Its subcellular location is the cytoplasm. It catalyses the reaction N(2)-formyl-N(1)-(5-phospho-beta-D-ribosyl)glycinamide + L-glutamine + ATP + H2O = 2-formamido-N(1)-(5-O-phospho-beta-D-ribosyl)acetamidine + L-glutamate + ADP + phosphate + H(+). Its pathway is purine metabolism; IMP biosynthesis via de novo pathway; 5-amino-1-(5-phospho-D-ribosyl)imidazole from N(2)-formyl-N(1)-(5-phospho-D-ribosyl)glycinamide: step 1/2. In terms of biological role, phosphoribosylformylglycinamidine synthase involved in the purines biosynthetic pathway. Catalyzes the ATP-dependent conversion of formylglycinamide ribonucleotide (FGAR) and glutamine to yield formylglycinamidine ribonucleotide (FGAM) and glutamate. In Aliivibrio fischeri (strain ATCC 700601 / ES114) (Vibrio fischeri), this protein is Phosphoribosylformylglycinamidine synthase.